The primary structure comprises 283 residues: HTH-type transcriptional activator RhaR (283 aa).

One can recognise an HTH araC/xylS-type domain in the interval 179–277 (DLLMAALGNS…GVTPRVWRQQ (99 aa)). DNA-binding regions (H-T-H motif) lie at residues 196–217 (QHFC…RQQT) and 244–267 (ISEI…TRET).

As to quaternary structure, binds DNA as a dimer.

Its subcellular location is the cytoplasm. Activates expression of the rhaSR operon in response to L-rhamnose. This is HTH-type transcriptional activator RhaR from Cronobacter sakazakii (strain ATCC BAA-894) (Enterobacter sakazakii).